Reading from the N-terminus, the 105-residue chain is Large ribosomal subunit protein uL24 (105 aa).

Belongs to the universal ribosomal protein uL24 family. In terms of assembly, part of the 50S ribosomal subunit.

One of two assembly initiator proteins, it binds directly to the 5'-end of the 23S rRNA, where it nucleates assembly of the 50S subunit. Its function is as follows. One of the proteins that surrounds the polypeptide exit tunnel on the outside of the subunit. The protein is Large ribosomal subunit protein uL24 of Staphylococcus aureus (strain Mu3 / ATCC 700698).